The sequence spans 174 residues: Probable adenylyl-sulfate kinase (174 aa).

10–17 provides a ligand contact to ATP; it reads GPSGAGKT. Ser-84 (phosphoserine intermediate) is an active-site residue.

It belongs to the APS kinase family.

The catalysed reaction is adenosine 5'-phosphosulfate + ATP = 3'-phosphoadenylyl sulfate + ADP + H(+). It participates in sulfur metabolism; hydrogen sulfide biosynthesis; sulfite from sulfate: step 2/3. Functionally, catalyzes the synthesis of activated sulfate. This chain is Probable adenylyl-sulfate kinase (cysC), found in Pyrococcus abyssi (strain GE5 / Orsay).